We begin with the raw amino-acid sequence, 257 residues long: Pimeloyl-[acyl-carrier protein] methyl ester esterase (257 aa).

The AB hydrolase-1 domain maps to leucine 16–serine 240. Substrate contacts are provided by residues tryptophan 22, serine 82–leucine 83, and phenylalanine 143–glutamine 147. Serine 82 acts as the Nucleophile in catalysis. Residues aspartate 207 and histidine 235 contribute to the active site. Position 235 (histidine 235) interacts with substrate.

This sequence belongs to the AB hydrolase superfamily. Carboxylesterase BioH family. As to quaternary structure, monomer.

Its subcellular location is the cytoplasm. The catalysed reaction is 6-carboxyhexanoyl-[ACP] methyl ester + H2O = 6-carboxyhexanoyl-[ACP] + methanol + H(+). Its pathway is cofactor biosynthesis; biotin biosynthesis. Its function is as follows. The physiological role of BioH is to remove the methyl group introduced by BioC when the pimeloyl moiety is complete. It allows to synthesize pimeloyl-ACP via the fatty acid synthetic pathway through the hydrolysis of the ester bonds of pimeloyl-ACP esters. The polypeptide is Pimeloyl-[acyl-carrier protein] methyl ester esterase (Aliivibrio fischeri (strain MJ11) (Vibrio fischeri)).